A 130-amino-acid chain; its full sequence is Acidic phospholipase A2 daboiatoxin B chain (130 aa).

An N-terminal signal peptide occupies residues 1 to 8; sequence MCLIGVEG. Intrachain disulfides connect C34/C123, C36/C52, C51/C103, C57/C130, C58/C96, C65/C89, and C83/C94. Y35, G37, and G39 together coordinate Ca(2+). H55 is an active-site residue. Position 56 (D56) interacts with Ca(2+). D97 is a catalytic residue.

Belongs to the phospholipase A2 family. Group II subfamily. D49 sub-subfamily. In terms of assembly, heterodimer of an acidic protein having phospholipase A2 activity (B chain) and an A chain which weakly inhibits the B chain enzymatic activity but potentiates its lethal potency. It depends on Ca(2+) as a cofactor. Expressed by the venom gland.

It localises to the secreted. It catalyses the reaction a 1,2-diacyl-sn-glycero-3-phosphocholine + H2O = a 1-acyl-sn-glycero-3-phosphocholine + a fatty acid + H(+). Its function is as follows. Monomer: Snake venom phospholipase A2 (PLA2) that shows a high PLA2 activity (2110 umol/min/mg). Functionally, heterodimer (A and B chains): snake venom phospholipase A2 that shows a moderate PLA2 activity (1377 umol/min/mg). Acts as a presynaptic neurotoxin. In vivo, induces edema and produces neurotoxic symptoms in mice. It exhibits indirect hemolysis and a strong myonecrotic activity and is cytotoxic. PLA2 catalyzes the calcium-dependent hydrolysis of the 2-acyl groups in 3-sn-phosphoglycerides. In Daboia siamensis (Eastern Russel's viper), this protein is Acidic phospholipase A2 daboiatoxin B chain.